The sequence spans 161 residues: UPF0225 protein GSU1048 (161 aa).

It belongs to the UPF0225 family.

This is UPF0225 protein GSU1048 from Geobacter sulfurreducens (strain ATCC 51573 / DSM 12127 / PCA).